Consider the following 446-residue polypeptide: Glycerol-3-phosphate acyltransferase 3 (446 aa).

A run of 3 helical transmembrane segments spans residues 25–45, 142–162, and 164–184; these read LPSA…VLVK, LRLT…LLPL, and FTLA…VGQL. The short motif at 232-237 is the HXXXXD motif element; sequence HTSPID. Residues 352–372 traverse the membrane as a helical segment; the sequence is IVSYLLRIMTSWAIVCHVWYM. The interval 418–446 is disordered; that stretch reads FKEEQQKNYSKMLVRNGSQGNLPAGTESD.

The protein belongs to the 1-acyl-sn-glycerol-3-phosphate acyltransferase family.

It is found in the endoplasmic reticulum membrane. It catalyses the reaction sn-glycerol 3-phosphate + an acyl-CoA = a 1-acyl-sn-glycero-3-phosphate + CoA. The catalysed reaction is a 1-acyl-sn-glycero-3-phosphate + an acyl-CoA = a 1,2-diacyl-sn-glycero-3-phosphate + CoA. The enzyme catalyses dodecanoyl-CoA + sn-glycerol 3-phosphate = 1-dodecanoyl-sn-glycerol 3-phosphate + CoA. It carries out the reaction sn-glycerol 3-phosphate + hexadecanoyl-CoA = 1-hexadecanoyl-sn-glycero-3-phosphate + CoA. It catalyses the reaction sn-glycerol 3-phosphate + (9Z)-octadecenoyl-CoA = 1-(9Z-octadecenoyl)-sn-glycero-3-phosphate + CoA. The catalysed reaction is (9Z,12Z)-octadecadienoyl-CoA + sn-glycerol 3-phosphate = 1-(9Z,12Z)-octadecadienoyl-sn-glycero-3-phosphate + CoA. The enzyme catalyses 1-tetradecanoyl-sn-glycerol 3-phosphate + (9Z)-octadecenoyl-CoA = 1-tetradecanoyl-2-(9Z)-octadecenoyl-sn-glycero-3-phosphate + CoA. It carries out the reaction 1-hexadecanoyl-sn-glycero-3-phosphate + (9Z)-octadecenoyl-CoA = 1-hexadecanoyl-2-(9Z-octadecenoyl)-sn-glycero-3-phosphate + CoA. It catalyses the reaction 1-(9Z-octadecenoyl)-sn-glycero-3-phosphate + (9Z)-octadecenoyl-CoA = 1,2-di-(9Z-octadecenoyl)-sn-glycero-3-phosphate + CoA. The catalysed reaction is 1-(6Z,9Z,12Z-octadecatrienoyl)-sn-glycero-3-phosphate + (9Z)-octadecenoyl-CoA = (6Z,9Z,12Z)-octadecatrienoyl-2-(9Z)-octadecenoyl-sn-glycero-3-phosphate + CoA. The enzyme catalyses 1-(9Z,12Z,15Z)-octadecatrienoyl-sn-glycero-3-phosphate + (9Z)-octadecenoyl-CoA = 1-(9Z,12Z,15Z)-octadecatrienoyl-2-(9Z)-octadecenoyl-sn-glycero-3-phosphate + CoA. It carries out the reaction 1-(9Z-octadecenoyl)-sn-glycero-3-phosphate + tetradecanoyl-CoA = 1-(9Z)-octadecenoyl-2-tetradecanoyl-sn-glycero-3-phosphate + CoA. It catalyses the reaction 1-(9Z-octadecenoyl)-sn-glycero-3-phosphate + hexadecanoyl-CoA = 1-(9Z)-octadecenoyl-2-hexadecanoyl-sn-glycero-3-phosphate + CoA. The catalysed reaction is 1-(9Z-octadecenoyl)-sn-glycero-3-phosphate + octadecanoyl-CoA = 1-(9Z-octadecenoyl)-2-octadecanoyl-sn-glycero-3-phosphate + CoA. The enzyme catalyses 1-(9Z-octadecenoyl)-sn-glycero-3-phosphate + (9Z,12Z)-octadecadienoyl-CoA = 1-(9Z)-octadecenoyl-2-(9Z,12Z)-octadecadienoyl-sn-glycero-3-phosphate + CoA. It carries out the reaction 1-(5Z,8Z,11Z,14Z-eicosatetraenoyl)-sn-glycero-3-phosphate + (9Z)-octadecenoyl-CoA = 1-(5Z,8Z,11Z,14Z)-eicosatetraenoyl-2-(9Z)-octadecenoyl-sn-glycero-3-phosphate + CoA. Its pathway is glycerolipid metabolism; triacylglycerol biosynthesis. The protein operates within phospholipid metabolism; CDP-diacylglycerol biosynthesis; CDP-diacylglycerol from sn-glycerol 3-phosphate: step 1/3. Converts glycerol-3-phosphate to 1-acyl-sn-glycerol-3-phosphate (lysophosphatidic acid or LPA) by incorporating an acyl moiety at the sn-1 position of the glycerol backbone. Also converts LPA into 1,2-diacyl-sn-glycerol-3-phosphate (phosphatidic acid or PA) by incorporating an acyl moiety at the sn-2 position of the glycerol backbone. Protects cells against lipotoxicity. The protein is Glycerol-3-phosphate acyltransferase 3 of Gallus gallus (Chicken).